The following is a 513-amino-acid chain: Serine/threonine protein phosphatase 2A 55 kDa regulatory subunit B alpha isoform (513 aa).

At M1 the chain carries N-acetylmethionine. WD repeat units lie at residues 36-75 (QEVD…NSSG), 112-153 (EIEE…IKKI), 232-270 (AHDY…QSFN), 281-321 (DLSE…LCDS), 340-378 (EIIA…GPVA), and 483-513 (DYTT…MYYA).

This sequence belongs to the phosphatase 2A regulatory subunit B family. PP2A consists of a common heteromeric enzyme, composed of a catalytic subunit (subunits C), a constant regulatory subunit (subunit A), and a variety of regulatory subunits such as subunits B (the R2/B/PR55/B55, R3/B''/PR72/PR130/PR59 and R5/B'/B56 families). Interacts with SIC/RON3. As to expression, expressed ubiquitously.

In terms of biological role, the B regulatory subunit may modulate substrate selectivity and catalytic activity, and may also direct the localization of the catalytic enzyme to a particular subcellular compartment. The chain is Serine/threonine protein phosphatase 2A 55 kDa regulatory subunit B alpha isoform (PP2AB1) from Arabidopsis thaliana (Mouse-ear cress).